The following is a 190-amino-acid chain: Adenine phosphoribosyltransferase (190 aa).

It belongs to the purine/pyrimidine phosphoribosyltransferase family. Homodimer.

It localises to the cytoplasm. The enzyme catalyses AMP + diphosphate = 5-phospho-alpha-D-ribose 1-diphosphate + adenine. It functions in the pathway purine metabolism; AMP biosynthesis via salvage pathway; AMP from adenine: step 1/1. Its function is as follows. Catalyzes a salvage reaction resulting in the formation of AMP, that is energically less costly than de novo synthesis. The sequence is that of Adenine phosphoribosyltransferase from Cupriavidus pinatubonensis (strain JMP 134 / LMG 1197) (Cupriavidus necator (strain JMP 134)).